The following is a 184-amino-acid chain: ATP-dependent protease subunit HslV (184 aa).

The active site involves Thr-12. Ala-166, Cys-169, and Thr-172 together coordinate Na(+).

Belongs to the peptidase T1B family. HslV subfamily. In terms of assembly, a double ring-shaped homohexamer of HslV is capped on each side by a ring-shaped HslU homohexamer. The assembly of the HslU/HslV complex is dependent on binding of ATP.

Its subcellular location is the cytoplasm. The enzyme catalyses ATP-dependent cleavage of peptide bonds with broad specificity.. Its activity is regulated as follows. Allosterically activated by HslU binding. In terms of biological role, protease subunit of a proteasome-like degradation complex believed to be a general protein degrading machinery. In Brucella abortus (strain S19), this protein is ATP-dependent protease subunit HslV.